The chain runs to 228 residues: Derlin-3 (228 aa).

The Cytoplasmic portion of the chain corresponds to 1–22 (MAGQRLAAGFLQVPAVTRAYTA). A helical transmembrane segment spans residues 23-43 (ACVLTTAAVQLELLSPFQLYF). The Lumenal portion of the chain corresponds to 44–57 (NPHLVFRKFQVWRL). The helical transmembrane segment at 58-78 (ITTFLFFGPLGFGFFFNMLFV) threads the bilayer. The Cytoplasmic portion of the chain corresponds to 79 to 98 (FRYCRMLEEGSFRGRKADFV). The chain crosses the membrane as a helical span at residues 99–119 (FMFLFGGVLMTLLGFLGSLFF). Topologically, residues 120-168 (LGQALMAMLVYVWSRRSPHVRVNFFGLLNFQAPFLPWALMGFSLLLGNS) are lumenal. A helical membrane pass occupies residues 169-189 (VVTDLLGILVGHIYYFLEDVF). Over 190–228 (PNQPGGKRLLLTPSVLKLLLDDPQEDPDYLPLPEEQPEL) the chain is Cytoplasmic.

This sequence belongs to the derlin family. Forms homo- and heterooligomers with DERL2 and, to a lesser extent, with DERL1. Interacts with VCP and EDEM1. Interacts with SELENOK and SELENOS. Interacts with the signal recognition particle/SRP and the SRP receptor; in the process of endoplasmic reticulum stress-induced pre-emptive quality control. In terms of tissue distribution, highly expressed in spleen, lung, liver, spleen and testis. Expressed at intermediate level in kidney. Weakly or not expressed in brain, heart and skeletal muscle.

The protein resides in the endoplasmic reticulum membrane. Functionally, functional component of endoplasmic reticulum-associated degradation (ERAD) for misfolded lumenal glycoproteins, but not that of misfolded nonglycoproteins. May act by forming a channel that allows the retrotranslocation of misfolded glycoproteins into the cytosol where they are ubiquitinated and degraded by the proteasome. May mediate the interaction between VCP and the misfolded glycoproteins. May be involved in endoplasmic reticulum stress-induced pre-emptive quality control, a mechanism that selectively attenuates the translocation of newly synthesized proteins into the endoplasmic reticulum and reroutes them to the cytosol for proteasomal degradation. This is Derlin-3 from Mus musculus (Mouse).